The following is a 265-amino-acid chain: Transcription factor BHLH089 (265 aa).

The interval 1-132 (MDPAPTLAAE…PPPPEPPKQD (132 aa)) is disordered. Gly residues-rich tracts occupy residues 17–29 (LGGG…GGRG) and 44–53 (SRGGGGGGGA). A compositionally biased stretch (polar residues) spans 95–105 (SKSSGDNSSLR). Residues 142 to 155 (QATDSHSLAERARR) form a basic motif; degenerate region. The 51-residue stretch at 142–192 (QATDSHSLAERARREKISERMKILQDLVPGCNKVIGKASVLDEIINYIQAL) folds into the bHLH domain. Residues 156-192 (EKISERMKILQDLVPGCNKVIGKASVLDEIINYIQAL) are helix-loop-helix motif.

Belongs to the bHLH protein family. In terms of assembly, interacts with RSS3.

Its subcellular location is the nucleus. Functionally, transcription factor that may regulate jasmonate-regulated genes. The polypeptide is Transcription factor BHLH089 (Oryza sativa subsp. japonica (Rice)).